Here is a 461-residue protein sequence, read N- to C-terminus: CUGBP Elav-like family member 3 (461 aa).

RRM domains follow at residues 7–88 (IKLF…PADS) and 95–175 (RKLF…FADT). The segment covering 345–358 (PPALVAQQPPPPPQ) has biased composition (pro residues). The tract at residues 345 to 375 (PPALVAQQPPPPPQQQQQQQQQQQQREGPDG) is disordered. Positions 359–369 (QQQQQQQQQQQ) are enriched in low complexity. The RRM 3 domain maps to 376–454 (CNIFIYHLPQ…KRLKVQLKRP (79 aa)).

It belongs to the CELF/BRUNOL family.

It localises to the nucleus. Its subcellular location is the cytoplasm. In terms of biological role, RNA-binding protein involved in the regulation of pre-mRNA alternative splicing. Mediates exon inclusion and/or exclusion in pre-mRNA that are subject to tissue-specific and developmentally regulated alternative splicing. Specifically activates exon 5 inclusion of cardiac isoforms of TNNT2 during heart remodeling at the juvenile to adult transition. Activates the splicing of MAPT/Tau exon 10. Binds to muscle-specific splicing enhancer (MSE) intronic sites flanking the alternative exon 5 of TNNT2 pre-mRNA. In Bos taurus (Bovine), this protein is CUGBP Elav-like family member 3 (CELF3).